The primary structure comprises 125 residues: Secreted RxLR effector protein RXLR-C13 (125 aa).

The signal sequence occupies residues 1 to 23 (MVNSLTFTLVVVCLVRSCDGVAA). The RxLR-dEER motif lies at 43 to 73 (RVLQETATANDDVKKLSTSTKVDSKLNQEIK). Residue asparagine 85 is glycosylated (N-linked (GlcNAc...) asparagine). A helical transmembrane segment spans residues 106–123 (FFILATILLFPIAAYMVA).

Belongs to the RxLR effector family.

It localises to the secreted. It is found in the host endoplasmic reticulum membrane. Its function is as follows. Secreted effector that does not suppress pattern-triggered immunity (PTI) in plant host. In Plasmopara halstedii (Downy mildew of sunflower), this protein is Secreted RxLR effector protein RXLR-C13.